An 827-amino-acid chain; its full sequence is Zinc phosphodiesterase ELAC protein 2 (827 aa).

The transit peptide at 1–16 (MWALRSLLRPLGLRTM) directs the protein to the mitochondrion. 2 disordered regions span residues 15-46 (TMSQ…GWGP) and 181-220 (SERR…QCLP). Residues 181–192 (SERRCGEQEPSR) show a composition bias toward basic and acidic residues. Serine 193, serine 197, serine 202, serine 207, serine 617, and serine 735 each carry phosphoserine. Polar residues predominate over residues 199 to 210 (NRLSPKQSSSDP). The tract at residues 794–827 (LTQQADSSEDREPHQKRAHSEEPHSPQSKKVRAQ) is disordered. A Phosphothreonine modification is found at threonine 795. Serine 800 is modified (phosphoserine). Over residues 801–817 (SEDREPHQKRAHSEEPH) the composition is skewed to basic and acidic residues. A Phosphoserine modification is found at serine 818.

The protein belongs to the RNase Z family. Homodimer. Interacts with PTCD1. Zn(2+) is required as a cofactor.

The protein localises to the mitochondrion. It localises to the mitochondrion matrix. Its subcellular location is the mitochondrion nucleoid. It is found in the nucleus. The enzyme catalyses Endonucleolytic cleavage of RNA, removing extra 3' nucleotides from tRNA precursor, generating 3' termini of tRNAs. A 3'-hydroxy group is left at the tRNA terminus and a 5'-phosphoryl group is left at the trailer molecule.. In terms of biological role, zinc phosphodiesterase, which displays mitochondrial tRNA 3'-processing endonuclease activity. Involved in tRNA maturation, by removing a 3'-trailer from precursor tRNA. Associates with mitochondrial DNA complexes at the nucleoids to initiate RNA processing and ribosome assembly. This Rattus norvegicus (Rat) protein is Zinc phosphodiesterase ELAC protein 2 (Elac2).